We begin with the raw amino-acid sequence, 452 residues long: uncharacterized protein (452 aa).

One can recognise a TRAM domain in the interval 3–61; it reads KVKIGEKYEVDITSMGHEGEGVGRIDGIAVFVKGALKGERVIVEIEEVHKNYLKGYTVK. The [4Fe-4S] cluster site is built by C74, C80, C83, and C160. The S-adenosyl-L-methionine site is built by Q284, Y313, E334, and D382. Residue C409 is the Nucleophile of the active site.

Belongs to the class I-like SAM-binding methyltransferase superfamily. RNA M5U methyltransferase family.

This is an uncharacterized protein from Caldanaerobacter subterraneus subsp. tengcongensis (strain DSM 15242 / JCM 11007 / NBRC 100824 / MB4) (Thermoanaerobacter tengcongensis).